A 590-amino-acid polypeptide reads, in one-letter code: Hyaluronan synthase 1 (590 aa).

Residues 1-31 lie on the Cytoplasmic side of the membrane; the sequence is MKDKAAATMEIPEDPGIPKNLERKRPIVWRM. Residues 32-52 traverse the membrane as a helical segment; it reads IYYSFAVLLLAAFTAAYVTEF. Residues 53–60 are Extracellular-facing; that stretch reads QILTHEDV. A helical transmembrane segment spans residues 61 to 81; the sequence is LFSLGLYGLVMFLHLMMQSLF. Residues 82 to 401 are Cytoplasmic-facing; that stretch reads AYLEIRRINK…YNAQWWYKHH (320 aa). Residues 402-422 traverse the membrane as a helical segment; the sequence is IWMTYESVVHFIFPFFITATV. Over 423-425 the chain is Extracellular; the sequence is IRL. The chain crosses the membrane as a helical span at residues 426-446; that stretch reads LYASTIWNVVWLLLCIQIMSV. Over 447-456 the chain is Cytoplasmic; it reads LKSLYACWLR. The helical transmembrane segment at 457-477 threads the bilayer; that stretch reads GNPIMLLMSLYSMLYMTGLLP. Over 478–505 the chain is Extracellular; the sequence is SKYFAMLTINKSGWGTSGRKKIVGNYMP. A helical membrane pass occupies residues 506–526; the sequence is VLPLSIWMAVLCGGVGYSIYM. Over 527 to 543 the chain is Cytoplasmic; that stretch reads DCHQDWSTPEKQKELYH. Residues 544–564 form a helical membrane-spanning segment; sequence LLYGCISYTLYWVLMALMYWV. Residues 565–588 are Extracellular-facing; the sequence is WVKRCCRKRSQTVTLVHDIPERLV.

It belongs to the NodC/HAS family. It depends on Mg(2+) as a cofactor.

It is found in the membrane. It carries out the reaction [hyaluronan](n) + UDP-N-acetyl-alpha-D-glucosamine = N-acetyl-beta-D-glucosaminyl-(1-&gt;4)-[hyaluronan](n) + UDP + H(+). The catalysed reaction is N-acetyl-beta-D-glucosaminyl-(1-&gt;4)-[hyaluronan](n) + UDP-alpha-D-glucuronate = [hyaluronan](n+1) + UDP + H(+). It participates in glycan biosynthesis; hyaluronan biosynthesis. In terms of biological role, catalyzes the addition of GlcNAc or GlcUA monosaccharides to the nascent hyaluronan polymer. Therefore, it is essential to hyaluronan synthesis a major component of most extracellular matrices that has a structural role in tissues architectures and regulates cell adhesion, migration and differentiation. Also able to catalyze the synthesis of chito-oligosaccharide depending on the substrate. This Xenopus tropicalis (Western clawed frog) protein is Hyaluronan synthase 1 (has1).